The following is a 92-amino-acid chain: Small ribosomal subunit protein uS19 (92 aa).

Belongs to the universal ribosomal protein uS19 family.

In terms of biological role, protein S19 forms a complex with S13 that binds strongly to the 16S ribosomal RNA. The polypeptide is Small ribosomal subunit protein uS19 (Corynebacterium efficiens (strain DSM 44549 / YS-314 / AJ 12310 / JCM 11189 / NBRC 100395)).